A 163-amino-acid polypeptide reads, in one-letter code: 3-isopropylmalate dehydratase small subunit (163 aa).

It belongs to the LeuD family. LeuD type 2 subfamily. As to quaternary structure, heterodimer of LeuC and LeuD.

It catalyses the reaction (2R,3S)-3-isopropylmalate = (2S)-2-isopropylmalate. It participates in amino-acid biosynthesis; L-leucine biosynthesis; L-leucine from 3-methyl-2-oxobutanoate: step 2/4. Functionally, catalyzes the isomerization between 2-isopropylmalate and 3-isopropylmalate, via the formation of 2-isopropylmaleate. In Brachyspira hyodysenteriae (strain ATCC 49526 / WA1), this protein is 3-isopropylmalate dehydratase small subunit.